The chain runs to 502 residues: Aspartyl/glutamyl-tRNA(Asn/Gln) amidotransferase subunit B (502 aa).

The protein belongs to the GatB/GatE family. GatB subfamily. As to quaternary structure, heterotrimer of A, B and C subunits.

It catalyses the reaction L-glutamyl-tRNA(Gln) + L-glutamine + ATP + H2O = L-glutaminyl-tRNA(Gln) + L-glutamate + ADP + phosphate + H(+). The enzyme catalyses L-aspartyl-tRNA(Asn) + L-glutamine + ATP + H2O = L-asparaginyl-tRNA(Asn) + L-glutamate + ADP + phosphate + 2 H(+). Its function is as follows. Allows the formation of correctly charged Asn-tRNA(Asn) or Gln-tRNA(Gln) through the transamidation of misacylated Asp-tRNA(Asn) or Glu-tRNA(Gln) in organisms which lack either or both of asparaginyl-tRNA or glutaminyl-tRNA synthetases. The reaction takes place in the presence of glutamine and ATP through an activated phospho-Asp-tRNA(Asn) or phospho-Glu-tRNA(Gln). The sequence is that of Aspartyl/glutamyl-tRNA(Asn/Gln) amidotransferase subunit B from Ruegeria sp. (strain TM1040) (Silicibacter sp.).